A 480-amino-acid chain; its full sequence is ESX-1 secretion system ATPase EccB1 (480 aa).

Residues 44–64 (IALGIVVAVLILAGAALLAYF) form a helical membrane-spanning segment. The tract at residues 461–480 (DTLPADPSPRKVPAGASGAP) is disordered.

The protein belongs to the EccB family. In terms of assembly, part of the ESX-1 / type VII secretion system (T7SS), which is composed of cytosolic and membrane components. The ESX-1 membrane complex is composed of EccB1, EccCa1, EccCb1, EccD1 and EccE1.

It is found in the cell inner membrane. In terms of biological role, an ATPase. Part of the ESX-1 specialized secretion system, which delivers several virulence factors to host cells during infection, including the key virulence factors EsxA (ESAT-6) and EsxB (CFP-10). This chain is ESX-1 secretion system ATPase EccB1, found in Mycobacterium tuberculosis (strain CDC 1551 / Oshkosh).